The sequence spans 316 residues: Probable cell division protein WhiA (316 aa).

The H-T-H motif DNA-binding region spans 280–313 (SLKELGEMLEPPVGKSGVNHRLRKIEKIAEELRT).

This sequence belongs to the WhiA family.

Involved in cell division and chromosome segregation. The polypeptide is Probable cell division protein WhiA (Clostridium perfringens (strain ATCC 13124 / DSM 756 / JCM 1290 / NCIMB 6125 / NCTC 8237 / Type A)).